A 387-amino-acid polypeptide reads, in one-letter code: Carbamoyl phosphate synthase small chain (387 aa).

Residues 1–189 (MIKSAILVLE…GLPEDKQEQD (189 aa)) are CPSase. 3 residues coordinate L-glutamine: Ser-47, Gly-241, and Gly-243. Positions 193–380 (HVVAYDFGAK…IELIEQYCQK (188 aa)) constitute a Glutamine amidotransferase type-1 domain. Cys-269 serves as the catalytic Nucleophile. Residues Leu-270, Gln-273, Asn-311, Gly-313, and Phe-314 each coordinate L-glutamine. Catalysis depends on residues His-353 and Glu-355.

Belongs to the CarA family. Composed of two chains; the small (or glutamine) chain promotes the hydrolysis of glutamine to ammonia, which is used by the large (or ammonia) chain to synthesize carbamoyl phosphate. Tetramer of heterodimers (alpha,beta)4.

It catalyses the reaction hydrogencarbonate + L-glutamine + 2 ATP + H2O = carbamoyl phosphate + L-glutamate + 2 ADP + phosphate + 2 H(+). The enzyme catalyses L-glutamine + H2O = L-glutamate + NH4(+). Its pathway is amino-acid biosynthesis; L-arginine biosynthesis; carbamoyl phosphate from bicarbonate: step 1/1. It participates in pyrimidine metabolism; UMP biosynthesis via de novo pathway; (S)-dihydroorotate from bicarbonate: step 1/3. Small subunit of the glutamine-dependent carbamoyl phosphate synthetase (CPSase). CPSase catalyzes the formation of carbamoyl phosphate from the ammonia moiety of glutamine, carbonate, and phosphate donated by ATP, constituting the first step of 2 biosynthetic pathways, one leading to arginine and/or urea and the other to pyrimidine nucleotides. The small subunit (glutamine amidotransferase) binds and cleaves glutamine to supply the large subunit with the substrate ammonia. This Photorhabdus laumondii subsp. laumondii (strain DSM 15139 / CIP 105565 / TT01) (Photorhabdus luminescens subsp. laumondii) protein is Carbamoyl phosphate synthase small chain.